The following is a 158-amino-acid chain: Methylglyoxal synthase (158 aa).

Residues 1–158 (MRRKLRIALV…AFEESLKVKE (158 aa)) form the MGS-like domain. Substrate-binding positions include His12, Lys16, 38 to 41 (TGTT), and 63 to 64 (SG). Asp69 (proton donor/acceptor) is an active-site residue. Position 96 (His96) interacts with substrate.

It belongs to the methylglyoxal synthase family.

The enzyme catalyses dihydroxyacetone phosphate = methylglyoxal + phosphate. Its function is as follows. Catalyzes the formation of methylglyoxal from dihydroxyacetone phosphate. In Treponema socranskii, this protein is Methylglyoxal synthase.